A 243-amino-acid polypeptide reads, in one-letter code: 1-(5-phosphoribosyl)-5-[(5-phosphoribosylamino)methylideneamino] imidazole-4-carboxamide isomerase (243 aa).

The active-site Proton acceptor is the D8. D130 serves as the catalytic Proton donor.

This sequence belongs to the HisA/HisF family.

The protein resides in the cytoplasm. The enzyme catalyses 1-(5-phospho-beta-D-ribosyl)-5-[(5-phospho-beta-D-ribosylamino)methylideneamino]imidazole-4-carboxamide = 5-[(5-phospho-1-deoxy-D-ribulos-1-ylimino)methylamino]-1-(5-phospho-beta-D-ribosyl)imidazole-4-carboxamide. The protein operates within amino-acid biosynthesis; L-histidine biosynthesis; L-histidine from 5-phospho-alpha-D-ribose 1-diphosphate: step 4/9. The protein is 1-(5-phosphoribosyl)-5-[(5-phosphoribosylamino)methylideneamino] imidazole-4-carboxamide isomerase of Vesicomyosocius okutanii subsp. Calyptogena okutanii (strain HA).